A 92-amino-acid chain; its full sequence is MKILLAIALMLSTVMWVSTQQPQGVHTYCGRHLARTLANLCWEAGVDKRSDAQYVSYGSAWLMPYSEGRGKRGIVDECCLRPCSVDVLLSYC.

Residues 1-19 form the signal peptide; the sequence is MKILLAIALMLSTVMWVST. Glutamine 20 is modified (pyrrolidone carboxylic acid). 3 cysteine pairs are disulfide-bonded: cysteine 29–cysteine 79, cysteine 41–cysteine 92, and cysteine 78–cysteine 83. The propeptide at 50 to 70 is c peptide like; that stretch reads SDAQYVSYGSAWLMPYSEGRG.

It belongs to the insulin family. In terms of assembly, heterodimer of a B chain and an A chain linked by two disulfide bonds.

It is found in the secreted. Its function is as follows. Brain peptide responsible for activation of prothoracic glands to produce ecdysone in insects. The chain is Bombyxin A-3 (BBXA3) from Bombyx mori (Silk moth).